Consider the following 397-residue polypeptide: Tauropine dehydrogenase (397 aa).

This sequence belongs to the lysopine/nopaline/octopine/opine/vitopine dehydrogenases family.

The catalysed reaction is tauropine + NAD(+) + H2O = taurine + pyruvate + NADH + H(+). With respect to regulation, subject to substrate inhibition by pyruvate for the reverse reaction but not for the forward reaction of the tauropine dehydrogenase activity. May play a role in maintaining a redox balance during environmental and functional hypoxia. Exhibits high specificity for taurine and in addition, requires both alpha amino group and C-2 carbon chain length as a critical factor for active site binding of the amino acid. A methyl group in the beta position may be critical for active site binding of the keto acid. In the reverse reaction requires NAD(H) for the activity but not NADP(H). The protein is Tauropine dehydrogenase of Arabella iricolor (Opal worm).